Reading from the N-terminus, the 426-residue chain is Serine/threonine-protein kinase ssn3 (426 aa).

The region spanning 39–368 is the Protein kinase domain; the sequence is YHIVGFISSG…AKEALEHPYF (330 aa). ATP is bound by residues 45–53 and Lys-69; that span reads ISSGTYGRV. Residue Asp-171 is the Proton acceptor of the active site. Residues 389 to 398 show a composition bias toward basic and acidic residues; it reads RRITHDDNDI. Residues 389–426 form a disordered region; it reads RRITHDDNDIRSGSLPGTKRSGLPDDSLMSRAAKRMKE.

It belongs to the protein kinase superfamily. CMGC Ser/Thr protein kinase family. CDC2/CDKX subfamily. Component of the srb8-11 complex, a regulatory module of the Mediator complex. Mg(2+) is required as a cofactor.

It is found in the nucleus. It catalyses the reaction L-seryl-[protein] + ATP = O-phospho-L-seryl-[protein] + ADP + H(+). The enzyme catalyses L-threonyl-[protein] + ATP = O-phospho-L-threonyl-[protein] + ADP + H(+). The catalysed reaction is [DNA-directed RNA polymerase] + ATP = phospho-[DNA-directed RNA polymerase] + ADP + H(+). In terms of biological role, component of the srb8-11 complex. The srb8-11 complex is a regulatory module of the Mediator complex which is itself involved in regulation of basal and activated RNA polymerase II-dependent transcription. The srb8-11 complex may be involved in the transcriptional repression of a subset of genes regulated by Mediator. It may inhibit the association of the Mediator complex with RNA polymerase II to form the holoenzyme complex. The srb8-11 complex phosphorylates the C-terminal domain (CTD) of the largest subunit of RNA polymerase II. This chain is Serine/threonine-protein kinase ssn3 (ssn3), found in Emericella nidulans (strain FGSC A4 / ATCC 38163 / CBS 112.46 / NRRL 194 / M139) (Aspergillus nidulans).